We begin with the raw amino-acid sequence, 479 residues long: Altronate oxidoreductase (479 aa).

18–29 (IIQFGEGNFLRA) provides a ligand contact to NAD(+).

It belongs to the mannitol dehydrogenase family. UxaB subfamily.

It carries out the reaction D-altronate + NAD(+) = keto-D-tagaturonate + NADH + H(+). Its pathway is carbohydrate metabolism; pentose and glucuronate interconversion. This chain is Altronate oxidoreductase, found in Bacteroides thetaiotaomicron (strain ATCC 29148 / DSM 2079 / JCM 5827 / CCUG 10774 / NCTC 10582 / VPI-5482 / E50).